Consider the following 2318-residue polypeptide: MGLGARGRRRRRRLMALPPPPPPMRALPLLLLLAGLGAAAPPCLDGSPCANGGRCTHQQPSLEAACLCLPGWVGERCQLEDPCHSGPCAGRGVCQSSVVAGTARFSCRCLRGFQGPDCSQPDPCVSRPCVHGAPCSVGPDGRFACACPPGYQGQSCQSDIDECRSGTTCRHGGTCLNTPGSFRCQCPLGYTGLLCENPVVPCAPSPCRNGGTCRQSSDVTYDCACLPGFEGQNCEVNVDDCPGHRCLNGGTCVDGVNTYNCQCPPEWTGQFCTEDVDECQLQPNACHNGGTCFNLLGGHSCVCVNGWTGESCSQNIDDCATAVCFHGATCHDRVASFYCACPMGKTGLLCHLDDACVSNPCHEDAICDTNPVSGRAICTCPPGFTGGACDQDVDECSIGANPCEHLGRCVNTQGSFLCQCGRGYTGPRCETDVNECLSGPCRNQATCLDRIGQFTCICMAGFTGTYCEVDIDECQSSPCVNGGVCKDRVNGFSCTCPSGFSGSMCQLDVDECASTPCRNGAKCVDQPDGYECRCAEGFEGTLCERNVDDCSPDPCHHGRCVDGIASFSCACAPGYTGIRCESQVDECRSQPCRYGGKCLDLVDKYLCRCPPGTTGVNCEVNIDDCASNPCTFGVCRDGINRYDCVCQPGFTGPLCNVEINECASSPCGEGGSCVDGENGFHCLCPPGSLPPLCLPANHPCAHKPCSHGVCHDAPGGFRCVCEPGWSGPRCSQSLAPDACESQPCQAGGTCTSDGIGFRCTCAPGFQGHQCEVLSPCTPSLCEHGGHCESDPDRLTVCSCPPGWQGPRCQQDVDECAGASPCGPHGTCTNLPGNFRCICHRGYTGPFCDQDIDDCDPNPCLHGGSCQDGVGSFSCSCLDGFAGPRCARDVDECLSSPCGPGTCTDHVASFTCACPPGYGGFHCEIDLPDCSPSSCFNGGTCVDGVSSFSCLCRPGYTGTHCQYEADPCFSRPCLHGGICNPTHPGFECTCREGFTGSQCQNPVDWCSQAPCQNGGRCVQTGAYCICPPGWSGRLCDIQSLPCTEAAAQMGVRLEQLCQEGGKCIDKGRSHYCVCPEGRTGSHCEHEVDPCTAQPCQHGGTCRGYMGGYVCECPAGYAGDSCEDNIDECASQPCQNGGSCIDLVARYLCSCPPGTLGVLCEINEDDCDLGPSLDSGVQCLHNGTCVDLVGGFRCNCPPGYTGLHCEADINECRPGACHAAHTRDCLQDPGGHFRCVCHPGFTGPRCQIALSPCESQPCQHGGQCRHSLGRGGGLTFTCHCVPPFWGLRCERVARSCRELQCPVGIPCQQTARGPRCACPPGLSGPSCRVSRASPSGATNASCASAPCLHGGSCLPVQSVPFFRCVCAPGWGGPRCETPSAAPEVPEEPRCPRAACQAKRGDQNCDRECNTPGCGWDGGDCSLNVDDPWRQCEALQCWRLFNNSRCDPACSSPACLYDNFDCYSGGRDRTCNPVYEKYCADHFADGRCDQGCNTEECGWDGLDCASEVPALLARGVLVLTVLLPPEELLRSSADFLQRLSAILRTSLRFRLDARGQAMVFPYHRPSPGSESRVRRELGPEVIGSVVMLEIDNRLCLQSAENDHCFPDAQSAADYLGALSAVERLDFPYPLRDVRGEPLEAPEQSVPLLPLLVAGAVFLLIIFILGVMVARRKREHSTLWFPEGFALHKDIAAGHKGRREPVGQDALGMKNMAKGESLMGEVVTDLNDSECPEAKRLKVEEPGMGAEEPEDCRQWTQHHLVAADIRVAPATALTPPQGDADADGVDVNVRGPDGFTPLMLASFCGGALEPMPAEEDEADDTSASIISDLICQGAQLGARTDRTGETALHLAARYARADAAKRLLDAGADTNAQDHSGRTPLHTAVTADAQGVFQILIRNRSTDLDARMADGSTALILAARLAVEGMVEELIASHADVNAVDELGKSALHWAAAVNNVEATLALLKNGANKDMQDSKEETPLFLAAREGSYEAAKLLLDHLANREITDHLDRLPRDVAQERLHQDIVRLLDQPSGPRSPSGPHGLGPLLCPPGAFLPGLKAVQSGTKKSRRPPGKTGLGPQGTRGRGKKLTLACPGPLADSSVTLSPVDSLDSPRPFSGPPASPGGFPLEGPYATTATAVSLAQLGASRAGPLGRQPPGGCVLSFGLLNPVAVPLDWARLPPPAPPGPSFLLPLAPGPQLLNPGAPVSPQERPPPYLAAPGHGEEYPAAGTRSSPTKARFLRVPSEHPYLTPSPESPEHWASPSPPSLSDWSDSTPSPATATNATASGALPAQPHPISVPSLPQSQTQLGPQPEVTPKRQVMA.

Basic residues predominate over residues 1 to 14 (MGLGARGRRRRRRL). A disordered region spans residues 1-20 (MGLGARGRRRRRRLMALPPP). An N-terminal signal peptide occupies residues 1–39 (MGLGARGRRRRRRLMALPPPPPPMRALPLLLLLAGLGAA). 3 EGF-like domains span residues 40-78 (APPCLDGSPCANGGRCTHQQPSLEAACLCLPGWVGERCQ), 79-119 (LEDP…PDCS), and 120-157 (QPDPCVSRPCVHGAPCSVGPDGRFACACPPGYQGQSCQ). At 40-1643 (APPCLDGSPC…PLEAPEQSVP (1604 aa)) the chain is on the extracellular side. Intrachain disulfides connect Cys-43–Cys-55, Cys-49–Cys-66, Cys-68–Cys-77, Cys-83–Cys-94, Cys-88–Cys-107, Cys-109–Cys-118, Cys-124–Cys-135, Cys-129–Cys-145, Cys-147–Cys-156, Cys-163–Cys-175, Cys-169–Cys-184, Cys-186–Cys-195, Cys-202–Cys-213, Cys-207–Cys-223, Cys-225–Cys-234, Cys-241–Cys-252, Cys-246–Cys-261, Cys-263–Cys-272, Cys-279–Cys-292, Cys-286–Cys-301, Cys-303–Cys-312, Cys-319–Cys-330, Cys-324–Cys-339, Cys-341–Cys-350, Cys-356–Cys-367, Cys-361–Cys-378, Cys-380–Cys-389, Cys-396–Cys-409, Cys-403–Cys-418, Cys-420–Cys-429, Cys-436–Cys-447, Cys-441–Cys-456, Cys-458–Cys-467, Cys-474–Cys-485, Cys-479–Cys-494, Cys-496–Cys-505, Cys-512–Cys-523, Cys-517–Cys-532, Cys-534–Cys-543, Cys-550–Cys-560, Cys-555–Cys-569, Cys-571–Cys-580, Cys-587–Cys-598, Cys-592–Cys-607, Cys-609–Cys-618, Cys-625–Cys-635, Cys-630–Cys-644, Cys-646–Cys-655, Cys-662–Cys-673, Cys-667–Cys-682, Cys-684–Cys-693, Cys-700–Cys-710, Cys-705–Cys-719, Cys-721–Cys-730, Cys-739–Cys-750, Cys-744–Cys-759, Cys-761–Cys-770, Cys-776–Cys-787, Cys-781–Cys-797, Cys-799–Cys-808, Cys-815–Cys-827, Cys-821–Cys-836, Cys-838–Cys-847, Cys-854–Cys-865, Cys-859–Cys-874, Cys-876–Cys-885, Cys-892–Cys-902, Cys-897–Cys-911, Cys-913–Cys-922, Cys-929–Cys-940, Cys-934–Cys-949, Cys-951–Cys-960, Cys-967–Cys-978, Cys-972–Cys-987, Cys-989–Cys-998, Cys-1005–Cys-1016, Cys-1010–Cys-1023, Cys-1025–Cys-1034, Cys-1041–Cys-1062, Cys-1056–Cys-1071, Cys-1073–Cys-1082, Cys-1089–Cys-1100, Cys-1094–Cys-1109, Cys-1111–Cys-1120, Cys-1127–Cys-1138, Cys-1132–Cys-1147, Cys-1149–Cys-1158, Cys-1165–Cys-1183, Cys-1177–Cys-1192, Cys-1194–Cys-1203, Cys-1210–Cys-1223, Cys-1215–Cys-1233, Cys-1235–Cys-1244, Cys-1251–Cys-1262, Cys-1256–Cys-1276, Cys-1278–Cys-1287, Cys-1294–Cys-1305, Cys-1299–Cys-1314, and Cys-1316–Cys-1325. Positions 159-196 (DIDECRSGTTCRHGGTCLNTPGSFRCQCPLGYTGLLCE) constitute an EGF-like 4; calcium-binding domain. An EGF-like 5 domain is found at 198-235 (PVVPCAPSPCRNGGTCRQSSDVTYDCACLPGFEGQNCE). The EGF-like 6; calcium-binding domain maps to 237–273 (NVDDCPGHRCLNGGTCVDGVNTYNCQCPPEWTGQFCT). Positions 275–313 (DVDECQLQPNACHNGGTCFNLLGGHSCVCVNGWTGESCS) constitute an EGF-like 7 domain. The EGF-like 8; calcium-binding domain occupies 315-351 (NIDDCATAVCFHGATCHDRVASFYCACPMGKTGLLCH). Residues 352–390 (LDDACVSNPCHEDAICDTNPVSGRAICTCPPGFTGGACD) form the EGF-like 9 domain. The region spanning 392–430 (DVDECSIGANPCEHLGRCVNTQGSFLCQCGRGYTGPRCE) is the EGF-like 10; calcium-binding domain. In terms of domain architecture, EGF-like 11; calcium-binding spans 432-468 (DVNECLSGPCRNQATCLDRIGQFTCICMAGFTGTYCE). One can recognise an EGF-like 12; calcium-binding domain in the interval 470–506 (DIDECQSSPCVNGGVCKDRVNGFSCTCPSGFSGSMCQ). The region spanning 508–544 (DVDECASTPCRNGAKCVDQPDGYECRCAEGFEGTLCE) is the EGF-like 13; calcium-binding domain. In terms of domain architecture, EGF-like 14; calcium-binding spans 546–581 (NVDDCSPDPCHHGRCVDGIASFSCACAPGYTGIRCE). The 37-residue stretch at 583 to 619 (QVDECRSQPCRYGGKCLDLVDKYLCRCPPGTTGVNCE) folds into the EGF-like 15; calcium-binding domain. Residues 621–656 (NIDDCASNPCTFGVCRDGINRYDCVCQPGFTGPLCN) form the EGF-like 16; calcium-binding domain. The EGF-like 17; calcium-binding domain maps to 658 to 694 (EINECASSPCGEGGSCVDGENGFHCLCPPGSLPPLCL). 3 consecutive EGF-like domains span residues 696–731 (ANHPCAHKPCSHGVCHDAPGGFRCVCEPGWSGPRCS), 735–771 (APDACESQPCQAGGTCTSDGIGFRCTCAPGFQGHQCE), and 772–809 (VLSPCTPSLCEHGGHCESDPDRLTVCSCPPGWQGPRCQ). An EGF-like 21; calcium-binding domain is found at 811–848 (DVDECAGASPCGPHGTCTNLPGNFRCICHRGYTGPFCD). One can recognise an EGF-like 22; calcium-binding domain in the interval 850 to 886 (DIDDCDPNPCLHGGSCQDGVGSFSCSCLDGFAGPRCA). The EGF-like 23; calcium-binding domain occupies 888 to 923 (DVDECLSSPCGPGTCTDHVASFTCACPPGYGGFHCE). 5 consecutive EGF-like domains span residues 925-961 (DLPDCSPSSCFNGGTCVDGVSSFSCLCRPGYTGTHCQ), 963-999 (EADPCFSRPCLHGGICNPTHPGFECTCREGFTGSQCQ), 1001-1035 (PVDWCSQAPCQNGGRCVQTGAYCICPPGWSGRLCD), 1037-1083 (QSLP…SHCE), and 1085-1121 (EVDPCTAQPCQHGGTCRGYMGGYVCECPAGYAGDSCE). In terms of domain architecture, EGF-like 29; calcium-binding spans 1123-1159 (NIDECASQPCQNGGSCIDLVARYLCSCPPGTLGVLCE). The EGF-like 30; calcium-binding domain maps to 1161 to 1204 (NEDDCDLGPSLDSGVQCLHNGTCVDLVGGFRCNCPPGYTGLHCE). N-linked (GlcNAc...) asparagine glycosylation is present at Asn-1180. EGF-like domains are found at residues 1206–1245 (DINECRPGACHAAHTRDCLQDPGGHFRCVCHPGFTGPRCQ), 1247–1288 (ALSP…LRCE), 1290–1326 (VARSCRELQCPVGIPCQQTARGPRCACPPGLSGPSCR), and 1336–1374 (TNASCASAPCLHGGSCLPVQSVPFFRCVCAPGWGGPRCE). Residue Asn-1337 is glycosylated (N-linked (GlcNAc...) asparagine). Cystine bridges form between Cys-1340/Cys-1351, Cys-1345/Cys-1362, Cys-1364/Cys-1373, Cys-1388/Cys-1411, Cys-1393/Cys-1406, Cys-1402/Cys-1418, Cys-1429/Cys-1452, Cys-1434/Cys-1447, Cys-1443/Cys-1459, Cys-1468/Cys-1494, Cys-1476/Cys-1489, and Cys-1485/Cys-1501. LNR repeat units lie at residues 1388-1428 (CPRA…PWRQ), 1429-1466 (CEALQCWRLFNNSRCDPACSSPACLYDNFDCYSGGRDR), and 1468-1506 (CNPVYEKYCADHFADGRCDQGCNTEECGWDGLDCASEVP). N-linked (GlcNAc...) asparagine glycosylation occurs at Asn-1439. Residues 1644–1664 (LLPLLVAGAVFLLIIFILGVM) traverse the membrane as a helical segment. Over 1665–2318 (VARRKREHST…EVTPKRQVMA (654 aa)) the chain is Cytoplasmic. 5 ANK repeats span residues 1839-1868 (TGETALHLAARYARADAAKRLLDAGADTNA), 1872-1902 (SGRTPLHTAVTADAQGVFQILIRNRSTDLDA), 1906-1935 (DGSTALILAARLAVEGMVEELIASHADVNA), 1939-1968 (LGKSALHWAAAVNNVEATLALLKNGANKDM), and 1972-2001 (KEETPLFLAAREGSYEAAKLLLDHLANREI). Disordered stretches follow at residues 2025-2045 (LDQPSGPRSPSGPHGLGPLLC) and 2058-2126 (QSGT…PLEG). The segment covering 2028-2045 (PSGPRSPSGPHGLGPLLC) has biased composition (low complexity). Arg-2174 is subject to Omega-N-methylarginine. Over residues 2184-2193 (SFLLPLAPGP) the composition is skewed to low complexity. The segment at 2184 to 2318 (SFLLPLAPGP…EVTPKRQVMA (135 aa)) is disordered. The interval 2242 to 2261 (HPYLTPSPESPEHWASPSPP) is PEST-like. A compositionally biased stretch (low complexity) spans 2262 to 2282 (SLSDWSDSTPSPATATNATAS). Over residues 2296-2305 (SLPQSQTQLG) the composition is skewed to polar residues.

This sequence belongs to the NOTCH family. In terms of assembly, interacts with PSMA1. Heterodimer of a C-terminal fragment N(TM) and a N-terminal fragment N(EC) which are probably linked by disulfide bonds. Interacts with MAML1, MAML2 and MAML3 which act as transcriptional coactivators for NOTCH3. Interacts with HIF1AN. Post-translationally, synthesized in the endoplasmic reticulum as an inactive form which is proteolytically cleaved by a furin-like convertase in the trans-Golgi network before it reaches the plasma membrane to yield an active, ligand-accessible form. Cleavage results in a C-terminal fragment N(TM) and a N-terminal fragment N(EC). Following ligand binding, it is cleaved by TNF-alpha converting enzyme (TACE) to yield a membrane-associated intermediate fragment called notch extracellular truncation (NEXT). This fragment is then cleaved by presenilin dependent gamma-secretase to release a notch-derived peptide containing the intracellular domain (NICD) from the membrane. In terms of processing, phosphorylated. Hydroxylated by HIF1AN. As to expression, proliferating neuroepithelium.

It localises to the cell membrane. The protein localises to the nucleus. In terms of biological role, functions as a receptor for membrane-bound ligands Jagged1, Jagged2 and Delta1 to regulate cell-fate determination. Upon ligand activation through the released notch intracellular domain (NICD) it forms a transcriptional activator complex with RBPJ/RBPSUH and activates genes of the enhancer of split locus. Affects the implementation of differentiation, proliferation and apoptotic programs. May play a role during CNS development. In Mus musculus (Mouse), this protein is Neurogenic locus notch homolog protein 3 (Notch3).